The sequence spans 584 residues: Arginine--tRNA ligase (584 aa).

A 'HIGH' region motif is present at residues 127 to 137 (PNTNKPLHVGH).

The protein belongs to the class-I aminoacyl-tRNA synthetase family. As to quaternary structure, monomer.

The protein localises to the cytoplasm. The enzyme catalyses tRNA(Arg) + L-arginine + ATP = L-arginyl-tRNA(Arg) + AMP + diphosphate. The polypeptide is Arginine--tRNA ligase (Borrelia turicatae (strain 91E135)).